The chain runs to 463 residues: Sodium-coupled neutral amino acid transporter 7 (463 aa).

Residue S28 is modified to Phosphoserine. 11 helical membrane-spanning segments follow: residues 56 to 76 (AIFI…PAAF), 82 to 102 (VAAG…GLVI), 130 to 150 (LCEV…LIII), 179 to 199 (FTIS…REIG), 206 to 226 (FLSV…YIWP), 240 to 260 (ASWI…QCHV), 283 to 303 (AAMV…FLTF), 320 to 340 (MAVA…YPIL), 372 to 392 (VLQT…IPDI), 396 to 416 (ISVI…LCLI), and 429 to 449 (ASWW…AFIF).

It belongs to the amino acid/polyamine transporter 2 family. Interacts with the mTORC1 complex; this interaction mediates the recruitment of mTORC1 to the lysosome and its subsequent activation.

Its subcellular location is the lysosome membrane. The protein localises to the cell projection. The protein resides in the axon. It carries out the reaction L-asparagine(in) + Na(+)(in) = L-asparagine(out) + Na(+)(out). It catalyses the reaction L-glutamine(in) + Na(+)(in) = L-glutamine(out) + Na(+)(out). Its function is as follows. Symporter that selectively cotransports sodium ions and amino acids, such as L-glutamine and L-asparagine from the lysosome into the cytoplasm and may participates in mTORC1 activation. The transport activity requires an acidic lysosomal lumen. This Bos taurus (Bovine) protein is Sodium-coupled neutral amino acid transporter 7.